Reading from the N-terminus, the 571-residue chain is Glutamine--tRNA ligase (571 aa).

Residues 35 to 45 carry the 'HIGH' region motif; the sequence is PEPNGYLHIGH. ATP-binding positions include 36 to 38 and 42 to 48; these read EPN and HIGHAKS. Residues aspartate 68 and tyrosine 213 each coordinate L-glutamine. ATP-binding positions include threonine 232, 262–263, and 270–272; these read RL and LSK. Positions 269 to 273 match the 'KMSKS' region motif; sequence ILSKR.

It belongs to the class-I aminoacyl-tRNA synthetase family. In terms of assembly, monomer.

It localises to the cytoplasm. It catalyses the reaction tRNA(Gln) + L-glutamine + ATP = L-glutaminyl-tRNA(Gln) + AMP + diphosphate. In Buchnera aphidicola subsp. Acyrthosiphon pisum (strain APS) (Acyrthosiphon pisum symbiotic bacterium), this protein is Glutamine--tRNA ligase.